Here is a 376-residue protein sequence, read N- to C-terminus: Serpin B6 (376 aa).

Methionine 1 is subject to N-acetylmethionine. At serine 151 the chain carries Phosphoserine. Residue lysine 195 is modified to N6-acetyllysine.

It belongs to the serpin family. Ov-serpin subfamily. In terms of assembly, forms a complex with the monomeric form of beta-tryptase.

It is found in the cytoplasm. Its function is as follows. Inhibitor of cathepsin G, kallikrein-8 and thrombin. May play an important role in the inner ear in the protection against leakage of lysosomal content during stress. May be involved in the regulation of serine proteinases present in the brain or extravasated from the blood. This is Serpin B6 (SERPINB6) from Pongo abelii (Sumatran orangutan).